Here is a 223-residue protein sequence, read N- to C-terminus: DNA mismatch repair protein MutH (223 aa).

Belongs to the MutH family.

The protein resides in the cytoplasm. In terms of biological role, sequence-specific endonuclease that cleaves unmethylated GATC sequences. It is involved in DNA mismatch repair. This chain is DNA mismatch repair protein MutH, found in Shewanella sp. (strain W3-18-1).